A 949-amino-acid chain; its full sequence is Syndetin (949 aa).

The tract at residues 1–28 is disordered; that stretch reads MQKIKSLMTRQGLRSPQESVHDLSPIEN. Residues 8 to 18 are compositionally biased toward polar residues; the sequence is MTRQGLRSPQE. Coiled-coil stretches lie at residues 82–104 and 198–226; these read SLQELEEYRDKLKQQQAAELERV and YSCISELNSKLQDTLEQIEEQLDVALSKI. The interval 509–581 is disordered; that stretch reads FEIQADSKDD…ETLRSRKKSD (73 aa). Basic and acidic residues predominate over residues 569-581; sequence VSRETLRSRKKSD.

The protein belongs to the syndetin family. Component of the endosome-associated retrograde protein (EARP) complex.

The protein localises to the recycling endosome. It localises to the membrane. In terms of biological role, acts as a component of the EARP complex that is involved in endocytic recycling. The EARP complex associates with Rab4-positive endosomes and promotes recycling of internalized transferrin receptor (TFRC) to the plasma membrane. This chain is Syndetin, found in Gallus gallus (Chicken).